The chain runs to 818 residues: BDNF/NT-3 growth factors receptor (818 aa).

The first 31 residues, 1 to 31 (MVSWRRRPGPGLARLWGLCCLVLGCWRGALG), serve as a signal peptide directing secretion. Intrachain disulfides connect C32-C38 and C36-C45. Residues 32–426 (CPASCRCSSW…DVSNKENEDS (395 aa)) lie on the Extracellular side of the membrane. N66 carries N-linked (GlcNAc...) asparagine glycosylation. An LRR 1 repeat occupies 71 to 92 (YIANQRKLESINDNEVGFYVGL). An N-linked (GlcNAc...) asparagine glycan is attached at N94. An LRR 2 repeat occupies 95–116 (LTVVDSGLRFVSRQAFVKNINL). N120 carries N-linked (GlcNAc...) asparagine glycosylation. Disulfide bonds link C151-C175 and C153-C193. One can recognise an Ig-like C2-type 1 domain in the interval 196-281 (PSANLSNYNI…GEVQTSAELT (86 aa)). Residues N199, N204, N226, N253, N287, N324, and N337 are each glycosylated (N-linked (GlcNAc...) asparagine). Residues C217 and C265 are joined by a disulfide bond. Positions 295-364 (TPDHHWCIPF…NGAYTLLAKN (70 aa)) constitute an Ig-like C2-type 2 domain. The cysteines at positions 301 and 344 are disulfide-linked. Positions 384–394 (GSGPIVDPDVY) are provides specificity for BDNF as ligand versus NTF3 and NTF4. Residues 400–418 (PNDLGDTTNNSNQITSPDV) show a composition bias toward polar residues. The interval 400–420 (PNDLGDTTNNSNQITSPDVSN) is disordered. N408 is a glycosylation site (N-linked (GlcNAc...) asparagine). A helical membrane pass occupies residues 427–450 (ITVYVVVGIAALVCTGLVIMLIIL). Over 451-818 (KFGRHSKFGM…ASPVYLDILG (368 aa)) the chain is Cytoplasmic. Positions 469–494 (NDDDSASPLHHISNGSNTPSSSEGGP) are disordered. Residues 481–491 (SNGSNTPSSSE) are compositionally biased toward polar residues. Y512 carries the phosphotyrosine; by autocatalysis modification. Residues 534–803 (IVLKRELGEG…LNIKEIHSLL (270 aa)) form the Protein kinase domain. ATP contacts are provided by residues 540–548 (LGEGAFGKV) and K568. The active-site Proton acceptor is D672. Phosphotyrosine; by autocatalysis is present on residues Y698, Y702, Y703, and Y813.

This sequence belongs to the protein kinase superfamily. Tyr protein kinase family. Insulin receptor subfamily. In terms of assembly, exists in a dynamic equilibrium between monomeric (low affinity) and dimeric (high affinity) structures. Interacts (phosphorylated upon activation by BDNF) with SHC1; mediates SHC1 phosphorylation and activation. Interacts (phosphorylated upon activation by BDNF) with PLCG1 and/or PLCG2; mediates PLCG1 phosphorylation and activation. Interacts with SH2B1 and SH2B2. Interacts with NGFR; may regulate the ligand specificity of the receptor. Interacts with SORCS2; this interaction is important for normal targeting to post-synaptic densities in response to high-frequency stimulation. Interacts (phosphorylated upon ligand-binding) with SH2D1A; regulates NTRK2. Interacts with SQSTM1 and KIDINS220. Interacts (phosphorylated upon ligand-binding) with FRS2; activates the MAPK signaling pathway. Interacts with APPL1. Interacts with MAPK8IP3/JIP3 and KLC1; interaction with KLC1 is mediated by MAPK8IP3/JIP3. Ligand-mediated auto-phosphorylation. As to expression, detected in embryonic brain and orsal root ganglia.

Its subcellular location is the cell membrane. The protein resides in the endosome membrane. It is found in the cell projection. It localises to the axon. The protein localises to the dendrite. Its subcellular location is the cytoplasm. The protein resides in the perinuclear region. It is found in the postsynaptic density. The enzyme catalyses L-tyrosyl-[protein] + ATP = O-phospho-L-tyrosyl-[protein] + ADP + H(+). With respect to regulation, the neuronal activity and the influx of calcium positively regulate the kinase activity and the internalization of the receptor which are both important for active signaling. Regulated by NGFR that may control the internalization of the receptor. NGFR may also stimulate the activation by BDNF compared to NTF3 and NTF4. The formation of active receptors dimers able to fully transduce the ligand-mediated signal, may be negatively regulated by the formation of inactive heterodimers with the non-catalytic isoforms. Functionally, receptor tyrosine kinase involved in the development and the maturation of the central and the peripheral nervous systems through regulation of neuron survival, proliferation, migration, differentiation, and synapse formation and plasticity. Receptor for BDNF/brain-derived neurotrophic factor and NTF4/neurotrophin-4. Alternatively can also bind NTF3/neurotrophin-3 which is less efficient in activating the receptor but regulates neuron survival through NTRK2. Upon ligand-binding, undergoes homodimerization, autophosphorylation and activation. Recruits, phosphorylates and/or activates several downstream effectors including SHC1, FRS2, SH2B1, SH2B2 and PLCG1 that regulate distinct overlapping signaling cascades. Through SHC1, FRS2, SH2B1, SH2B2 activates the GRB2-Ras-MAPK cascade that regulates for instance neuronal differentiation including neurite outgrowth. Through the same effectors controls the Ras-PI3 kinase-AKT1 signaling cascade that mainly regulates growth and survival. Through PLCG1 and the downstream protein kinase C-regulated pathways controls synaptic plasticity. Thereby, plays a role in learning and memory by regulating both short term synaptic function and long-term potentiation. PLCG1 also leads to NF-Kappa-B activation and the transcription of genes involved in cell survival. Hence, it is able to suppress anoikis, the apoptosis resulting from loss of cell-matrix interactions. May also play a role in neutrophin-dependent calcium signaling in glial cells and mediate communication between neurons and glia. The protein is BDNF/NT-3 growth factors receptor (NTRK2) of Gallus gallus (Chicken).